Here is a 910-residue protein sequence, read N- to C-terminus: Protein translocase subunit SecA (910 aa).

ATP-binding positions include Gln87, Gly105 to Thr109, and Asp508. The segment at Arg848–Ser910 is disordered. The span at Ala869–Gln880 shows a compositional bias: low complexity. Cys894, Cys896, Cys905, and His906 together coordinate Zn(2+). The segment covering Lys900–Ser910 has biased composition (basic residues).

This sequence belongs to the SecA family. Monomer and homodimer. Part of the essential Sec protein translocation apparatus which comprises SecA, SecYEG and auxiliary proteins SecDF-YajC and YidC. Zn(2+) serves as cofactor.

The protein localises to the cell inner membrane. The protein resides in the cytoplasm. It catalyses the reaction ATP + H2O + cellular proteinSide 1 = ADP + phosphate + cellular proteinSide 2.. Functionally, part of the Sec protein translocase complex. Interacts with the SecYEG preprotein conducting channel. Has a central role in coupling the hydrolysis of ATP to the transfer of proteins into and across the cell membrane, serving both as a receptor for the preprotein-SecB complex and as an ATP-driven molecular motor driving the stepwise translocation of polypeptide chains across the membrane. This Stenotrophomonas maltophilia (strain K279a) protein is Protein translocase subunit SecA.